Here is a 356-residue protein sequence, read N- to C-terminus: UDP-3-O-acylglucosamine N-acyltransferase (356 aa).

Residue histidine 242 is the Proton acceptor of the active site.

This sequence belongs to the transferase hexapeptide repeat family. LpxD subfamily. As to quaternary structure, homotrimer.

It catalyses the reaction a UDP-3-O-[(3R)-3-hydroxyacyl]-alpha-D-glucosamine + a (3R)-hydroxyacyl-[ACP] = a UDP-2-N,3-O-bis[(3R)-3-hydroxyacyl]-alpha-D-glucosamine + holo-[ACP] + H(+). The protein operates within bacterial outer membrane biogenesis; LPS lipid A biosynthesis. Functionally, catalyzes the N-acylation of UDP-3-O-acylglucosamine using 3-hydroxyacyl-ACP as the acyl donor. Is involved in the biosynthesis of lipid A, a phosphorylated glycolipid that anchors the lipopolysaccharide to the outer membrane of the cell. In Acinetobacter baylyi (strain ATCC 33305 / BD413 / ADP1), this protein is UDP-3-O-acylglucosamine N-acyltransferase.